Consider the following 622-residue polypeptide: DNA mismatch repair protein MutL (622 aa).

Belongs to the DNA mismatch repair MutL/HexB family.

Its function is as follows. This protein is involved in the repair of mismatches in DNA. It is required for dam-dependent methyl-directed DNA mismatch repair. May act as a 'molecular matchmaker', a protein that promotes the formation of a stable complex between two or more DNA-binding proteins in an ATP-dependent manner without itself being part of a final effector complex. In Phenylobacterium zucineum (strain HLK1), this protein is DNA mismatch repair protein MutL.